A 296-amino-acid polypeptide reads, in one-letter code: Nucleotide-binding protein SAG0531 (296 aa).

Residue 13–20 coordinates ATP; sequence GMSGAGKT. 63–66 serves as a coordination point for GTP; that stretch reads DMRS.

This sequence belongs to the RapZ-like family.

Displays ATPase and GTPase activities. This Streptococcus agalactiae serotype V (strain ATCC BAA-611 / 2603 V/R) protein is Nucleotide-binding protein SAG0531.